Reading from the N-terminus, the 360-residue chain is Biotin synthase 2 (360 aa).

A Radical SAM core domain is found at 53–280; sequence RRVKLNFLVN…TAEVRLSGGR (228 aa). The [4Fe-4S] cluster site is built by Cys-68, Cys-72, and Cys-75. Cys-112, Cys-145, Cys-205, and Arg-275 together coordinate [2Fe-2S] cluster.

Belongs to the radical SAM superfamily. Biotin synthase family. As to quaternary structure, homodimer. The cofactor is [4Fe-4S] cluster. It depends on [2Fe-2S] cluster as a cofactor.

It catalyses the reaction (4R,5S)-dethiobiotin + (sulfur carrier)-SH + 2 reduced [2Fe-2S]-[ferredoxin] + 2 S-adenosyl-L-methionine = (sulfur carrier)-H + biotin + 2 5'-deoxyadenosine + 2 L-methionine + 2 oxidized [2Fe-2S]-[ferredoxin]. The protein operates within cofactor biosynthesis; biotin biosynthesis; biotin from 7,8-diaminononanoate: step 2/2. Its function is as follows. Catalyzes the conversion of dethiobiotin (DTB) to biotin by the insertion of a sulfur atom into dethiobiotin via a radical-based mechanism. The chain is Biotin synthase 2 from Frankia casuarinae (strain DSM 45818 / CECT 9043 / HFP020203 / CcI3).